Reading from the N-terminus, the 194-residue chain is Molybdenum cofactor guanylyltransferase (194 aa).

Residues 12–14 (LAG), Lys-25, Asn-53, Asp-70, and Asp-100 contribute to the GTP site. Residue Asp-100 participates in Mg(2+) binding.

It belongs to the MobA family. Monomer. Requires Mg(2+) as cofactor.

It is found in the cytoplasm. It carries out the reaction Mo-molybdopterin + GTP + H(+) = Mo-molybdopterin guanine dinucleotide + diphosphate. Transfers a GMP moiety from GTP to Mo-molybdopterin (Mo-MPT) cofactor (Moco or molybdenum cofactor) to form Mo-molybdopterin guanine dinucleotide (Mo-MGD) cofactor. This is Molybdenum cofactor guanylyltransferase from Photobacterium profundum (strain SS9).